We begin with the raw amino-acid sequence, 249 residues long: UPF0696 protein C11orf68 homolog (249 aa).

This sequence belongs to the UPF0696 family.

The protein is UPF0696 protein C11orf68 homolog of Danio rerio (Zebrafish).